A 394-amino-acid chain; its full sequence is Proliferation-associated protein 2G4 (394 aa).

Ser-2 carries the post-translational modification N-acetylserine. At Ser-2 the chain carries Phosphoserine. The necessary for nucleolar localization stretch occupies residues 2–48 (SGEDEQQEQTIAEDLVVTKYKMGGDIANRVLRSLVEASSSGVSVLSL). Residues 46–54 (LSLCEKGDA) form an RNA-binding region. Lys-298 participates in a covalent cross-link: Glycyl lysine isopeptide (Lys-Gly) (interchain with G-Cter in SUMO2). The tract at residues 301–394 (LLQPFNVLYE…ETLEENGAGD (94 aa)) is necessary for nucleolar localization. Ser-335 is subject to Phosphoserine. Residues 358–394 (LQSSASRKTQKKKKKKASKTVENATSGETLEENGAGD) are disordered. Ser-361 carries the phosphoserine; by PKC/PRKCD modification. The tract at residues 361 to 375 (SASRKTQKKKKKKAS) is interaction with RNA. Positions 365–375 (KTQKKKKKKAS) are enriched in basic residues. Residues Thr-366 and Thr-386 each carry the phosphothreonine modification.

This sequence belongs to the peptidase M24 family. In terms of assembly, isoform 2 interacts with the cytoplasmic domain of non-phosphorylated ERBB3; the interaction requires PKC activity. Interacts with AR. Treatment with HRG leads to dissociation from ERBB3 and increases association with AR. Interacts with nucleolin/NCL. Component of a ribonucleoprotein complex containing at least PA2G4, NCL, TOP1, PABPC2, RPLP0, acetylated histone H1 (HIST1H1A or H1F1), histone H1 2/4, RPL4, RPL8, RPL15, RPL18, RPL18A, RPL21, RPL11, RPL12, RPL28, RPL27, RPLP2 and RPL24. Interacts with HDAC2. Interacts with RB1; the interaction is enhanced upon PA2G4 dephosphorylation. Interacts with AKT1. Isoform 1 and isoform 2 interact with RNF20. Isoform 2 interacts with HUWE1. Interacts with DNAJC21. In terms of processing, phosphorylated on serine and threonine residues. Phosphorylation is enhanced by HRG treatment. Basal phosphorylation is PKC-dependent and HRG-induced phosphorylation is predominantly PKC-independent. Phosphorylation at Ser-361 by PKC/PRKCD regulates its nucleolar localization. Isoform 2 is polyubiquitinated, leading to proteasomal degradation and phosphorylation by PKC/PRKCD enhances polyubiquitination. Widely expressed.

The protein localises to the cytoplasm. It is found in the nucleus. Its subcellular location is the nucleolus. May play a role in a ERBB3-regulated signal transduction pathway. Seems be involved in growth regulation. Acts a corepressor of the androgen receptor (AR) and is regulated by the ERBB3 ligand neuregulin-1/heregulin (HRG). Inhibits transcription of some E2F1-regulated promoters, probably by recruiting histone acetylase (HAT) activity. Binds RNA. Associates with 28S, 18S and 5.8S mature rRNAs, several rRNA precursors and probably U3 small nucleolar RNA. May be involved in regulation of intermediate and late steps of rRNA processing. May be involved in ribosome assembly. Mediates cap-independent translation of specific viral IRESs (internal ribosomal entry site). Together with PTBP1 is required for the translation initiation on the foot-and-mouth disease virus (FMDV) IRES. Regulates cell proliferation, differentiation, and survival. Isoform 1 suppresses apoptosis whereas isoform 2 promotes cell differentiation. The polypeptide is Proliferation-associated protein 2G4 (Pa2g4) (Mus musculus (Mouse)).